A 300-amino-acid chain; its full sequence is Protease HtpX homolog (300 aa).

Helical transmembrane passes span 7 to 24 (GILM…GALI) and 29 to 46 (GAII…FTFW). H130 serves as a coordination point for Zn(2+). E131 is a catalytic residue. H134 provides a ligand contact to Zn(2+). The next 2 membrane-spanning stretches (helical) occupy residues 145–165 (VTAT…FFGG) and 174–194 (PMGL…AGLV). Residue E203 participates in Zn(2+) binding.

This sequence belongs to the peptidase M48B family. The cofactor is Zn(2+).

The protein localises to the cell inner membrane. This chain is Protease HtpX homolog, found in Cereibacter sphaeroides (strain ATCC 17029 / ATH 2.4.9) (Rhodobacter sphaeroides).